The sequence spans 474 residues: Hepatocyte nuclear factor 4-alpha (474 aa).

The segment at residues 57–132 is a DNA-binding region (nuclear receptor); it reads SALCAICGDR…AGMKKEAVQN (76 aa). 2 consecutive NR C4-type zinc fingers follow at residues 60–80 and 96–120; these read CAICGDRATGKHYGASSCDGC and CRFSRQCVVDKDKRNQCRYCRLKKC. Phosphoserine occurs at positions 142 and 143. Tyr144 is modified (phosphotyrosine). One can recognise an NR LBD domain in the interval 147–377; the sequence is SSLPSINALL…NLLQEMLLGG (231 aa). Thr166 carries the phosphothreonine modification. Ser167 carries the phosphoserine modification. Residues Lys234 and Lys307 each participate in a glycyl lysine isopeptide (Lys-Gly) (interchain with G-Cter in ubiquitin) cross-link. Ser313 is subject to Phosphoserine; by AMPK. Positions 368-376 match the 9aaTAD motif; that stretch reads NLLQEMLLG. The disordered stretch occupies residues 419-447; that stretch reads EWPRPRGQAATPETPQPSPPGGSGSEPYK. A phosphothreonine mark is found at Thr429 and Thr432. The residue at position 436 (Ser436) is a Phosphoserine. At Lys458 the chain carries N6-acetyllysine.

Belongs to the nuclear hormone receptor family. NR2 subfamily. As to quaternary structure, homodimerization is required for HNF4-alpha to bind to its recognition site. Interacts with CLOCK, BMAL1, CRY1, CRY2, PER1 and PER2. Interacts with NR0B2/SHP; the resulting heterodimer is transcriptionally inactive. Interacts with DDX3X; this interaction disrupts the interaction between HNF4 and NR0B2 that forms inactive heterodimers and enhances the formation of active HNF4 homodimers. In terms of processing, phosphorylated on tyrosine residue(s); phosphorylation is important for its DNA-binding activity. Phosphorylation may directly or indirectly play a regulatory role in the subnuclear distribution. Phosphorylation at Ser-313 by AMPK reduces the ability to form homodimers and bind DNA. Post-translationally, acetylation at Lys-458 lowers transcriptional activation by about two-fold.

It is found in the nucleus. Its function is as follows. Transcriptional regulator which controls the expression of hepatic genes during the transition of endodermal cells to hepatic progenitor cells, facilitating the recruitment of RNA pol II to the promoters of target genes. Activates the transcription of CYP2C38. Represses the CLOCK-BMAL1 transcriptional activity and is essential for circadian rhythm maintenance and period regulation in the liver and colon cells. The sequence is that of Hepatocyte nuclear factor 4-alpha (HNF4A) from Homo sapiens (Human).